The following is a 114-amino-acid chain: T cell receptor beta variable 6-9 (114 aa).

Positions 1–21 are cleaved as a signal peptide; sequence MSIGLLCCVAFSLLWAGPVNA. In terms of domain architecture, Ig-like spans 22 to 114; it reads GVTQTPKFHI…TSVYFCASSY (93 aa). Cysteine 42 and cysteine 110 form a disulfide bridge. N-linked (GlcNAc...) asparagine glycosylation occurs at asparagine 84.

Alpha-beta TR is a heterodimer composed of an alpha and beta chain; disulfide-linked. The alpha-beta TR is associated with the transmembrane signaling CD3 coreceptor proteins to form the TR-CD3 (TcR or TCR). The assembly of alpha-beta TR heterodimers with CD3 occurs in the endoplasmic reticulum where a single alpha-beta TR heterodimer associates with one CD3D-CD3E heterodimer, one CD3G-CD3E heterodimer and one CD247 homodimer forming a stable octameric structure. CD3D-CD3E and CD3G-CD3E heterodimers preferentially associate with TR alpha and TR beta chains, respectively. The association of the CD247 homodimer is the last step of TcR assembly in the endoplasmic reticulum and is required for transport to the cell surface.

It is found in the cell membrane. In terms of biological role, v region of the variable domain of T cell receptor (TR) beta chain that participates in the antigen recognition. Alpha-beta T cell receptors are antigen specific receptors which are essential to the immune response and are present on the cell surface of T lymphocytes. Recognize peptide-major histocompatibility (MH) (pMH) complexes that are displayed by antigen presenting cells (APC), a prerequisite for efficient T cell adaptive immunity against pathogens. Binding of alpha-beta TR to pMH complex initiates TR-CD3 clustering on the cell surface and intracellular activation of LCK that phosphorylates the ITAM motifs of CD3G, CD3D, CD3E and CD247 enabling the recruitment of ZAP70. In turn ZAP70 phosphorylates LAT, which recruits numerous signaling molecules to form the LAT signalosome. The LAT signalosome propagates signal branching to three major signaling pathways, the calcium, the mitogen-activated protein kinase (MAPK) kinase and the nuclear factor NF-kappa-B (NF-kB) pathways, leading to the mobilization of transcription factors that are critical for gene expression and essential for T cell growth and differentiation. The T cell repertoire is generated in the thymus, by V-(D)-J rearrangement. This repertoire is then shaped by intrathymic selection events to generate a peripheral T cell pool of self-MH restricted, non-autoaggressive T cells. Post-thymic interaction of alpha-beta TR with the pMH complexes shapes TR structural and functional avidity. In Homo sapiens (Human), this protein is T cell receptor beta variable 6-9.